Consider the following 429-residue polypeptide: Ribosomal RNA small subunit methyltransferase B (429 aa).

Residues 254-260, aspartate 277, aspartate 303, and aspartate 322 each bind S-adenosyl-L-methionine; that span reads CAAPGGK. The active-site Nucleophile is cysteine 375.

This sequence belongs to the class I-like SAM-binding methyltransferase superfamily. RsmB/NOP family.

The protein localises to the cytoplasm. The enzyme catalyses cytidine(967) in 16S rRNA + S-adenosyl-L-methionine = 5-methylcytidine(967) in 16S rRNA + S-adenosyl-L-homocysteine + H(+). Functionally, specifically methylates the cytosine at position 967 (m5C967) of 16S rRNA. In Escherichia coli O7:K1 (strain IAI39 / ExPEC), this protein is Ribosomal RNA small subunit methyltransferase B.